A 605-amino-acid chain; its full sequence is Leucine-rich repeat-containing protein 40 (605 aa).

Residues 1 to 26 (MSRFRRGGKAPDPLSGFRAPKEQEPA) form a disordered region. LRR repeat units follow at residues 83-104 (DLTKLILASNKLQLLSEDISLL), 106-127 (ALVVLDIHDNQIVSLPCAIKEL), 129-151 (NLQKLNISHNKIKQLPKELQHLQ), 152-173 (NLKSLLLQHNQLEELPDSIGHL), 175-196 (ILEELDVSNNCLRSISSSVGQL), 198-219 (GLVKFNLSSNKLTALPTEIGKM), 221-242 (NLKQLDCTSNLLENVPASVAGM), 244-265 (SLEQLYLRQNKLTYLPELPFLT), 266-287 (KLKELHVGNNQIQTLGPEHLQN), 290-311 (SLSVLELRYNKLKVLPEEISLL), 313-335 (GLERLDLSNNDLGSLPCTLGSLP), 336-357 (NLKSLQLEGNPLRGIRRDILNK), 429-450 (FITTVNFSKNQLTEVPARIVEM), 453-475 (SVCDVNLGFNKISSISLNLCMLL), 476-497 (KLTHIDMRNNVLTSLPSEMEAM), 499-520 (RLQSVILSFNRFKHFPDVLYRI), 522-543 (TLETILISSNQIGSIDPTQLIK), 546-567 (KLSTLDLQNNDLLQIPPALGNC), and 569-590 (SLRALHLEGNPFRNPRAAILAK).

The polypeptide is Leucine-rich repeat-containing protein 40 (lrrc40) (Xenopus tropicalis (Western clawed frog)).